A 235-amino-acid chain; its full sequence is UPF0749 protein YlxX (235 aa).

A helical membrane pass occupies residues 6–26; sequence SFISISVLMVIFGLMISVQFN.

It belongs to the UPF0749 family.

The protein resides in the cell membrane. The sequence is that of UPF0749 protein YlxX (ylxX) from Bacillus subtilis (strain 168).